The primary structure comprises 317 residues: Probable cell division protein WhiA (317 aa).

A DNA-binding region (H-T-H motif) is located at residues 278-311 (SLQGLGELLDPQVGKSGVNHRLRKIGEKADELRQ).

This sequence belongs to the WhiA family.

Functionally, involved in cell division and chromosome segregation. This Lachnospira eligens (strain ATCC 27750 / DSM 3376 / VPI C15-48 / C15-B4) (Eubacterium eligens) protein is Probable cell division protein WhiA.